We begin with the raw amino-acid sequence, 351 residues long: Serine protease inhibitor dipetalogastin (351 aa).

Positions 1-131 are excised as a propeptide; sequence LIKELVNMVI…AETTNAMEVL (131 aa). Kazal-like domains follow at residues 19 to 69, 72 to 122, 131 to 181, 184 to 234, 240 to 289, and 297 to 347; these read KELK…PCDE, HDFE…ECHA, LFQG…PCDE, HDFE…ECHP, QLIL…ECKV, and GEVR…RCLP. Cystine bridges form between Cys25-Cys50, Cys27-Cys46, Cys35-Cys67, Cys78-Cys103, Cys80-Cys99, Cys88-Cys120, Cys137-Cys162, Cys139-Cys158, Cys147-Cys179, Cys190-Cys215, Cys192-Cys211, Cys200-Cys232, Cys246-Cys271, Cys248-Cys267, Cys256-Cys287, Cys303-Cys328, Cys305-Cys324, and Cys313-Cys345.

The protein localises to the secreted. In terms of biological role, thrombin inhibitor. Prevents blood clotting to allow insect to feed on blood. Also functions as an inhibitor of trypsin and plasmin. In Dipetalogaster maximus (Blood-sucking bug), this protein is Serine protease inhibitor dipetalogastin.